The primary structure comprises 249 residues: UDP-N-acetyl-D-mannosaminuronic acid transferase (249 aa).

It belongs to the glycosyltransferase 26 family.

It carries out the reaction UDP-N-acetyl-alpha-D-mannosaminouronate + N-acetyl-alpha-D-glucosaminyl-di-trans,octa-cis-undecaprenyl diphosphate = beta-D-ManNAcA-(1-&gt;4)-alpha-D-GlcNAc-di-trans,octa-cis-undecaprenyl diphosphate + UDP + H(+). The protein operates within bacterial outer membrane biogenesis; enterobacterial common antigen biosynthesis. In terms of biological role, catalyzes the synthesis of Und-PP-GlcNAc-ManNAcA (Lipid II), the second lipid-linked intermediate involved in enterobacterial common antigen (ECA) synthesis. The polypeptide is UDP-N-acetyl-D-mannosaminuronic acid transferase (Pectobacterium carotovorum subsp. carotovorum (strain PC1)).